Reading from the N-terminus, the 236-residue chain is MAATNIDVCAVVPAAGYGRRMQTECPKQYLSIGNKTILEHSVHALLAHPRVTRVIIVISPGDSRFAQLPLANHPQITVVDGGEERADSVLAGIKAVGDAEWVLVHDAARPCLHQDDLARLLTLSETSRTGGILAAPVRDTMKRAEPGKNAIAHTVDRSGLWHALTPQFFPRELLHDCLTRALNEGATITDEASALEYCGFHPQLVEGRADNIKVTRPEDLALAEFYLTRTIHQENT.

This sequence belongs to the IspD/TarI cytidylyltransferase family. IspD subfamily. In terms of assembly, homodimer.

The enzyme catalyses 2-C-methyl-D-erythritol 4-phosphate + CTP + H(+) = 4-CDP-2-C-methyl-D-erythritol + diphosphate. It participates in isoprenoid biosynthesis; isopentenyl diphosphate biosynthesis via DXP pathway; isopentenyl diphosphate from 1-deoxy-D-xylulose 5-phosphate: step 2/6. In terms of biological role, catalyzes the formation of 4-diphosphocytidyl-2-C-methyl-D-erythritol from CTP and 2-C-methyl-D-erythritol 4-phosphate (MEP). In Escherichia fergusonii (strain ATCC 35469 / DSM 13698 / CCUG 18766 / IAM 14443 / JCM 21226 / LMG 7866 / NBRC 102419 / NCTC 12128 / CDC 0568-73), this protein is 2-C-methyl-D-erythritol 4-phosphate cytidylyltransferase.